The sequence spans 120 residues: MFSLPGYEYFLGFLIIAAAVPILALVTNLIVSPKGRTGERKLTYESGMEPIGGAWIQFNIRYYMFALVFVIFDVETVFLYPWAVAFNRLGLLAFIEALIFITILVIALAYAWRKGALEWS.

A run of 3 helical transmembrane segments spans residues 10-30, 64-84, and 89-109; these read FLGFLIIAAAVPILALVTNLI, MFALVFVIFDVETVFLYPWAV, and LGLLAFIEALIFITILVIALA.

The protein belongs to the complex I subunit 3 family. NDH-1 can be composed of about 15 different subunits; different subcomplexes with different compositions have been identified which probably have different functions.

Its subcellular location is the cellular thylakoid membrane. It carries out the reaction a plastoquinone + NADH + (n+1) H(+)(in) = a plastoquinol + NAD(+) + n H(+)(out). It catalyses the reaction a plastoquinone + NADPH + (n+1) H(+)(in) = a plastoquinol + NADP(+) + n H(+)(out). Functionally, NDH-1 shuttles electrons from an unknown electron donor, via FMN and iron-sulfur (Fe-S) centers, to quinones in the respiratory and/or the photosynthetic chain. The immediate electron acceptor for the enzyme in this species is believed to be plastoquinone. Couples the redox reaction to proton translocation, and thus conserves the redox energy in a proton gradient. Cyanobacterial NDH-1 also plays a role in inorganic carbon-concentration. This is NAD(P)H-quinone oxidoreductase subunit 3 from Prochlorococcus marinus subsp. pastoris (strain CCMP1986 / NIES-2087 / MED4).